Here is a 56-residue protein sequence, read N- to C-terminus: Ovomucoid (56 aa).

The Kazal-like domain maps to 6-56; that stretch reads VDCSDHPKPACLQEQKPLCGSDNKTYDNKCSFCNAVVDSNGTLTLSHFGKC. Intrachain disulfides connect C8/C38, C16/C35, and C24/C56. The N-linked (GlcNAc...) asparagine glycan is linked to N45.

It is found in the secreted. The chain is Ovomucoid from Penelope jacquacu (Spix's guan).